The primary structure comprises 623 residues: Chaperone protein HtpG (623 aa).

The a; substrate-binding stretch occupies residues 1-326 (MAEEKRQFQA…SQDLPLNVSR (326 aa)). Positions 327–543 (EMLQHNPVLS…EGEMSMHLEK (217 aa)) are b. The tract at residues 544 to 623 (MLRAHNQAPG…VSVMEKGLLG (80 aa)) is c.

The protein belongs to the heat shock protein 90 family. Homodimer.

The protein resides in the cytoplasm. Its function is as follows. Molecular chaperone. Has ATPase activity. The polypeptide is Chaperone protein HtpG (Paramagnetospirillum magneticum (strain ATCC 700264 / AMB-1) (Magnetospirillum magneticum)).